The primary structure comprises 208 residues: Fibroblast growth factor-binding protein 2 (208 aa).

The N-terminal stretch at 1-19 (MKRVALLFLVVICGMGGLG) is a signal peptide. 3 disulfide bridges follow: C43/C59, C68/C102, and C77/C113. Residues 130–181 (EPEDGANRDKSSQKTSASVRGAGKSSVKKTGKPAVLPRIKPTQHGQGSENET) are disordered. A disulfide bond links C191 and C199.

This sequence belongs to the fibroblast growth factor-binding protein family.

It is found in the secreted. It localises to the extracellular space. This Gallus gallus (Chicken) protein is Fibroblast growth factor-binding protein 2 (FGFBP2).